Here is a 438-residue protein sequence, read N- to C-terminus: MVDIIKTNATFKAGKGNKGTLSFEIPAKQISSGIDQAFNKQKDKINIPGFRKGHVSKELFLARFGEEALYEDALNAILPDIYDQAVNEADITVVGQPQIIPDDLKHGGPSKIHAEVTLAPTVELGDYKGVEVEKESDEVSDKELNAELERLQKGEAELVPAKEDQVSEKGDTVVIDFDGSVDGKQFDGGKAQNFSLSLGSGQFIPGFEDQLVGHKAGDDVDVKVTFPKDYQAKNLAGKEAVFAVTIHELKKLETPALDNEFAKDVDDSVLVLEELKAKTKEKLAKDKAEKNKDAFEDAAIQKVVDGAKINPEKLPEEMINDDVSRQMQTFFNNLAGQGVKPEMYFQIPNQPGAVKATNDRRRTNRVKTNLVLEEIARVEKINPSNEEIDKEIKSLASEYNIKESEVEKSVSAGMLSHDLKVQQAVELIVNSAQAVEKK.

Residues 170–255 (GDTVVIDFDG…IHELKKLETP (86 aa)) enclose the PPIase FKBP-type domain.

This sequence belongs to the FKBP-type PPIase family. Tig subfamily.

The protein resides in the cytoplasm. It catalyses the reaction [protein]-peptidylproline (omega=180) = [protein]-peptidylproline (omega=0). In terms of biological role, involved in protein export. Acts as a chaperone by maintaining the newly synthesized protein in an open conformation. Functions as a peptidyl-prolyl cis-trans isomerase. This Oenococcus oeni (Leuconostoc oenos) protein is Trigger factor (tig).